The sequence spans 84 residues: Transcriptional regulator WhiB1 (84 aa).

The 4Fe-4S Wbl-type domain occupies 8-70 (VCRDEDPELF…GGMSEDERRA (63 aa)). The [4Fe-4S] cluster site is built by cysteine 9, cysteine 37, cysteine 40, and cysteine 46.

Belongs to the WhiB family. In terms of assembly, homodimer. Requires [4Fe-4S] cluster as cofactor. In terms of processing, the Fe-S cluster can be nitrosylated by nitric oxide (NO). Upon Fe-S cluster removal intramolecular disulfide bonds are formed.

The protein resides in the cytoplasm. In terms of biological role, acts as a transcriptional regulator. Probably redox-responsive. The apo- but not holo-form probably binds DNA. The protein is Transcriptional regulator WhiB1 (whiB1) of Mycobacterium tuberculosis (strain CDC 1551 / Oshkosh).